A 327-amino-acid polypeptide reads, in one-letter code: MLWIWAVLPLVLAGSQLRVHTQGTNSISESLKLRRRVRETDKNCSEGLYQGGPFCCQPCQPGKKKVEDCKMNGGTPTCAPCTEGKEYMDKNHYADKCRRCTLCDEEHGLEVETNCTLTQNTKCKCKPDFYCDSPGCEHCVRCASCEHGTLEPCTATSNTNCRKQSPRNRLWLLTILVLLIPLVFIYRKYRKRKCWKRRQDDPESRTSSRETIPMNASNLSLSKYIPRIAEDMTIQEAKKFARENNIKEGKIDEIMHDSIQDTAEQKVQLLLCWYQSHGKSDAYQDLIKGLKKAECRRTLDKFQDMVQKDLGKSTPDTGNENEGQCLE.

The N-terminal stretch at 1–21 is a signal peptide; that stretch reads MLWIWAVLPLVLAGSQLRVHT. Residues 22 to 169 are Extracellular-facing; sequence QGTNSISESL…NCRKQSPRNR (148 aa). A glycan (N-linked (GlcNAc...) asparagine) is linked at N43. TNFR-Cys repeat units lie at residues 43-79, 80-123, and 124-162; these read NCSE…PTCA, PCTE…NTKC, and KCKP…TNCR. Cystine bridges form between C44–C55, C56–C69, C59–C78, C81–C97, C100–C115, C103–C123, C125–C139, C142–C153, and C145–C161. N114 is a glycosylation site (N-linked (GlcNAc...) asparagine). A helical membrane pass occupies residues 170 to 186; the sequence is LWLLTILVLLIPLVFIY. Residues 187–327 lie on the Cytoplasmic side of the membrane; it reads RKYRKRKCWK…GNENEGQCLE (141 aa). C194 carries the S-palmitoyl cysteine lipid modification. An interaction with HIPK3 region spans residues 204 to 309; it reads SRTSSRETIP…DKFQDMVQKD (106 aa). A Phosphothreonine modification is found at T206. S217 and S220 each carry phosphoserine. Positions 222–246 are interaction with CALM; it reads SKYIPRIAEDMTIQEAKKFARENNI. A Death domain is found at 222–306; sequence SKYIPRIAED…RTLDKFQDMV (85 aa). The disordered stretch occupies residues 308-327; that stretch reads KDLGKSTPDTGNENEGQCLE. T314 is subject to Phosphothreonine. Positions 314-327 are enriched in polar residues; sequence TPDTGNENEGQCLE.

As to quaternary structure, component of the death-induced signaling complex (DISC) composed of cell surface receptor FAS/CD95, adapter protein FADD and the CASP8 protease; recruitment of CASP8 to the complex is required for processing of CASP8 into the p18 and p10 subunits. Interacts directly (via DED domain) with NOL3 (via CARD domain); inhibits death-inducing signaling complex (DISC) assembly by inhibiting the increase in FAS-FADD binding induced by FAS activation. Binds DAXX. Interacts with HIPK3. Part of a complex containing HIPK3 and FADD. Binds RIPK1 and FAIM2. Interacts with BABAM2 and FEM1B. Interacts with CALM. In the absence of stimulation, interacts with BIRC2, DDX3X and GSK3B. The interaction with BIRC2 and DDX3X is further enhanced upon receptor stimulation and accompanied by DDX3X and BIRC2 cleavage. Palmitoylated. Palmitoylation by ZDHHC7 prevents the lysosomal degradation of FAS regulating its expression at the plasma membrane. In terms of tissue distribution, detected in various tissues including thymus, liver, lung, heart, and adult ovary.

Its subcellular location is the cell membrane. It is found in the membrane raft. Functionally, receptor for TNFSF6/FASLG. The adapter molecule FADD recruits caspase CASP8 to the activated receptor. The resulting death-inducing signaling complex (DISC) performs CASP8 proteolytic activation which initiates the subsequent cascade of caspases (aspartate-specific cysteine proteases) mediating apoptosis. FAS-mediated apoptosis may have a role in the induction of peripheral tolerance, in the antigen-stimulated suicide of mature T-cells, or both. The polypeptide is Tumor necrosis factor receptor superfamily member 6 (Fas) (Mus musculus (Mouse)).